We begin with the raw amino-acid sequence, 117 residues long: uncharacterized protein (117 aa).

An N-terminal signal peptide occupies residues 1-23; the sequence is MVSEAEFMAALAKFAETSATASA.

This is an uncharacterized protein from Archaeoglobus fulgidus (strain ATCC 49558 / DSM 4304 / JCM 9628 / NBRC 100126 / VC-16).